Reading from the N-terminus, the 139-residue chain is Cytochrome c-type biogenesis protein CcmE 2 (139 aa).

Residues 1 to 9 (MASLKKSRR) are Cytoplasmic-facing. Residues 10–30 (VRLILFSGVALVSATALIGYA) form a helical; Signal-anchor for type II membrane protein membrane-spanning segment. Residues 31–139 (MRDGIQFFRT…ELAEMEALRD (109 aa)) are Periplasmic-facing. His122 and Tyr126 together coordinate heme.

The protein belongs to the CcmE/CycJ family.

The protein localises to the cell inner membrane. Its function is as follows. Heme chaperone required for the biogenesis of c-type cytochromes. Transiently binds heme delivered by CcmC and transfers the heme to apo-cytochromes in a process facilitated by CcmF and CcmH. The chain is Cytochrome c-type biogenesis protein CcmE 2 from Ruegeria pomeroyi (strain ATCC 700808 / DSM 15171 / DSS-3) (Silicibacter pomeroyi).